The sequence spans 363 residues: MRTKAYALALKGMFTMSPERIHHIITRGMQLVQAISPLRRAVGSILPVNDPILRQEVFGVTFPQPLGLAAGFDKNGEAPDVWAAFGFGYAELGTVTASPQPGNPTPRLFRLPADKAILNRMGFNNLGAAEVAKNLKRRKSDAVIGINIGKTKVVASKDAVNDYRRSALLLGNLADYLVINVSSPNTPGLRDLQAVESLRPIIAAVQESTSVPVLVKIAPDLSDDDIDAVADLAVEMGIAGIVATNTTISRNGLRTPHQDVADMGAGGISGAPVAQRSLEVLERLYAHVGTEMVLIGVGGISTPQQAWERIAAGATLLQGYTGMIYGGPDWIRDIHLGIAAQLRAHDLSSIDQAVGSKLPWTLQ.

FMN contacts are provided by residues 70-74 (AGFDK) and threonine 94. Residue lysine 74 participates in substrate binding. 119 to 123 (NRMGF) is a binding site for substrate. FMN is bound by residues asparagine 147 and asparagine 180. Asparagine 180 lines the substrate pocket. Serine 183 serves as the catalytic Nucleophile. Asparagine 185 lines the substrate pocket. FMN is bound by residues lysine 216 and threonine 244. Substrate is bound at residue 245-246 (NT). Residues glycine 270, glycine 299, and 320 to 321 (YT) contribute to the FMN site.

This sequence belongs to the dihydroorotate dehydrogenase family. Type 2 subfamily. As to quaternary structure, monomer. It depends on FMN as a cofactor.

The protein resides in the cell membrane. It catalyses the reaction (S)-dihydroorotate + a quinone = orotate + a quinol. Its pathway is pyrimidine metabolism; UMP biosynthesis via de novo pathway; orotate from (S)-dihydroorotate (quinone route): step 1/1. Functionally, catalyzes the conversion of dihydroorotate to orotate with quinone as electron acceptor. The sequence is that of Dihydroorotate dehydrogenase (quinone) from Corynebacterium diphtheriae (strain ATCC 700971 / NCTC 13129 / Biotype gravis).